Reading from the N-terminus, the 888-residue chain is CRISPR-associated endonuclease/helicase Cas3 (888 aa).

The region spanning 20–231 (KGNDIHLLIY…AGFCSLADWL (212 aa)) is the HD Cas3-type domain. Mg(2+) contacts are provided by Asp-75 and His-160. Residues 301-504 (DALPVAPGLT…LDTYGLHTDP (204 aa)) form the Helicase ATP-binding domain. 314–321 (APTGSGKT) contributes to the ATP binding site. Positions 452–455 (DEVH) match the DEAH box motif. Residues 556-735 (MLERMIAAAN…AYRQWLDSIY (180 aa)) form the Helicase C-terminal domain.

In the N-terminal section; belongs to the CRISPR-associated nuclease Cas3-HD family. It in the central section; belongs to the CRISPR-associated helicase Cas3 family. In terms of assembly, interacts with the CasA subunit of Cascade once Cascade has recognized target DNA. It depends on Mg(2+) as a cofactor.

Functionally, CRISPR (clustered regularly interspaced short palindromic repeat), is an adaptive immune system that provides protection against mobile genetic elements (viruses, transposable elements and conjugative plasmids). CRISPR clusters contain sequences complementary to antecedent mobile elements and target invading nucleic acids. CRISPR clusters are transcribed and processed into CRISPR RNA (crRNA). Cas3 plus Cascade participate in CRISPR interference, the third stage of CRISPR immunity. In terms of biological role, acts as an endonuclease, a 3'-5'exonuclease, and an ATP-dependent dsDNA helicase. Anneals and unwinds R-loops (in which crRNA binds the target DNA, displacing the noncomplementary strand). Unwinding requires ATP, annealing does not. Required along with the Cascade complex for resistance to bacteriophage lambda infection as well as the ability to cure CRISPR-encoding high-copy number plasmid. A Cas3-CasA fusion protein purified with the Cascade complex nicks target plasmid in the presence but not absence of Mg(2+), and degrades plasmid fully in the presence of Mg(2+) and ATP, suggesting the helicase activity is required for complete degradation. The protein is CRISPR-associated endonuclease/helicase Cas3 (ygcB) of Escherichia coli (strain K12).